Reading from the N-terminus, the 480-residue chain is Aspartyl/glutamyl-tRNA(Asn/Gln) amidotransferase subunit B (480 aa).

The protein belongs to the GatB/GatE family. GatB subfamily. In terms of assembly, heterotrimer of A, B and C subunits.

It catalyses the reaction L-glutamyl-tRNA(Gln) + L-glutamine + ATP + H2O = L-glutaminyl-tRNA(Gln) + L-glutamate + ADP + phosphate + H(+). The enzyme catalyses L-aspartyl-tRNA(Asn) + L-glutamine + ATP + H2O = L-asparaginyl-tRNA(Asn) + L-glutamate + ADP + phosphate + 2 H(+). Allows the formation of correctly charged Asn-tRNA(Asn) or Gln-tRNA(Gln) through the transamidation of misacylated Asp-tRNA(Asn) or Glu-tRNA(Gln) in organisms which lack either or both of asparaginyl-tRNA or glutaminyl-tRNA synthetases. The reaction takes place in the presence of glutamine and ATP through an activated phospho-Asp-tRNA(Asn) or phospho-Glu-tRNA(Gln). The chain is Aspartyl/glutamyl-tRNA(Asn/Gln) amidotransferase subunit B from Streptococcus pneumoniae serotype 2 (strain D39 / NCTC 7466).